The chain runs to 88 residues: Small ribosomal subunit protein uS15 (88 aa).

The protein belongs to the universal ribosomal protein uS15 family. As to quaternary structure, part of the 30S ribosomal subunit. Forms a bridge to the 50S subunit in the 70S ribosome, contacting the 23S rRNA.

One of the primary rRNA binding proteins, it binds directly to 16S rRNA where it helps nucleate assembly of the platform of the 30S subunit by binding and bridging several RNA helices of the 16S rRNA. Its function is as follows. Forms an intersubunit bridge (bridge B4) with the 23S rRNA of the 50S subunit in the ribosome. This chain is Small ribosomal subunit protein uS15, found in Geotalea daltonii (strain DSM 22248 / JCM 15807 / FRC-32) (Geobacter daltonii).